A 212-amino-acid polypeptide reads, in one-letter code: MSPDLSIEQTLLARGYRVLAGIDEAGRGCWAGPVVAAAVVLAPIVYERPGLLDAVDDSKQLTAVARERAYTLVQRYARGIGVGTVPAFLVDAYGILPATRLAMTLALLSLPCSVDALLIDAERLPGIRVPQESLVRGDARSLSIAAASIIAKVTRDRLMQTADRCYPQYGFALHKGYGTPVHRRALRQYGPSPFHRRTFQPVLELLDLTDSS.

The 195-residue stretch at 17 to 211 (RVLAGIDEAG…VLELLDLTDS (195 aa)) folds into the RNase H type-2 domain. A divalent metal cation-binding residues include Asp23, Glu24, and Asp120.

Belongs to the RNase HII family. The cofactor is Mn(2+). Requires Mg(2+) as cofactor.

Its subcellular location is the cytoplasm. It carries out the reaction Endonucleolytic cleavage to 5'-phosphomonoester.. Its function is as follows. Endonuclease that specifically degrades the RNA of RNA-DNA hybrids. This is Ribonuclease HII from Chloroflexus aggregans (strain MD-66 / DSM 9485).